The following is a 353-amino-acid chain: Mitogen-activated protein kinase FUS3 (353 aa).

In terms of domain architecture, Protein kinase spans 13 to 309; that stretch reads FQLKSLLGEG…AKEALEHPYL (297 aa). Residues 19–27 and lysine 42 contribute to the ATP site; that span reads LGEGAYGVV. Aspartate 137 functions as the Proton acceptor in the catalytic mechanism. Threonine 180 carries the post-translational modification Phosphothreonine. Positions 180–182 match the TXY motif; it reads TEY. At tyrosine 182 the chain carries Phosphotyrosine. Lysine 345 participates in a covalent cross-link: Glycyl lysine isopeptide (Lys-Gly) (interchain with G-Cter in ubiquitin).

This sequence belongs to the protein kinase superfamily. CMGC Ser/Thr protein kinase family. MAP kinase subfamily. In terms of assembly, in the nucleus, FUS3 forms a complex with DIG1, DIG2 and STE12. The interaction of FUS3 with STE12 depends on the presence of both DIG1 and DIG2. STE12 is lost from FUS3/DIG1/DIG2 complex after pheromone treatment. During its activation and phosphorylation, FUS3 forms a membrane-associated complex with the scaffold protein STE5, the MAPKK STE7, the MAPKKK STE11, and the G-protein beta subunit GBB/STE4; interacting directly with STE7 and STE5. Mg(2+) serves as cofactor. In terms of processing, dually phosphorylated on Thr-180 and Tyr-182 by STE7 in response to pheromone induction, which activates the enzyme. Activated FUS3 initiates a feedback signal, down-regulating phosphorylation of both, FUS3 and KSS1.

It is found in the nucleus. Its subcellular location is the cytoplasm. It localises to the periplasm. The enzyme catalyses L-seryl-[protein] + ATP = O-phospho-L-seryl-[protein] + ADP + H(+). It catalyses the reaction L-threonyl-[protein] + ATP = O-phospho-L-threonyl-[protein] + ADP + H(+). Its activity is regulated as follows. Activated by tyrosine and threonine phosphorylation after pheromone treatment. In terms of biological role, together with closely related KSS1, FUS3 is the final kinase in the signal transduction cascade regulating activation/repression of the mating and filamentation pathways, induced by pheromone and nitrogen/carbon limitation, respectively. Phosphorylated FUS3 activates the mating but suppresses the filamentation pathway, whereas activated KSS1 activates both pathways. Pheromone-activated FUS3 functions by inhibiting the binding of the transcriptional activator STE12 to filamentation specific genes while inducing its binding to and activity at mating specific genes. Non-activated FUS3 has a repressive effect on STE12 transcriptional activity. KSS1 can partially compensate for the lack of FUS3 but mating efficiency is reduced and the filamentation program is partially activated upon pheromone signaling. FUS3 phosphorylates STE7, STE5, FAR1, DIG1, DIG2 and STE12. The protein is Mitogen-activated protein kinase FUS3 (FUS3) of Saccharomyces cerevisiae (strain ATCC 204508 / S288c) (Baker's yeast).